The primary structure comprises 157 residues: 2-C-methyl-D-erythritol 2,4-cyclodiphosphate synthase (157 aa).

A divalent metal cation is bound by residues aspartate 9 and histidine 11. 4-CDP-2-C-methyl-D-erythritol 2-phosphate is bound by residues 9-11 (DVH) and 35-36 (HS). Histidine 43 is an a divalent metal cation binding site. Residues 57 to 59 (DIG), 62 to 66 (FPDTD), 101 to 107 (AQKPKMA), 133 to 136 (TTTE), phenylalanine 140, and arginine 143 each bind 4-CDP-2-C-methyl-D-erythritol 2-phosphate.

This sequence belongs to the IspF family. In terms of assembly, homotrimer. A divalent metal cation serves as cofactor.

It catalyses the reaction 4-CDP-2-C-methyl-D-erythritol 2-phosphate = 2-C-methyl-D-erythritol 2,4-cyclic diphosphate + CMP. The protein operates within isoprenoid biosynthesis; isopentenyl diphosphate biosynthesis via DXP pathway; isopentenyl diphosphate from 1-deoxy-D-xylulose 5-phosphate: step 4/6. Involved in the biosynthesis of isopentenyl diphosphate (IPP) and dimethylallyl diphosphate (DMAPP), two major building blocks of isoprenoid compounds. Catalyzes the conversion of 4-diphosphocytidyl-2-C-methyl-D-erythritol 2-phosphate (CDP-ME2P) to 2-C-methyl-D-erythritol 2,4-cyclodiphosphate (ME-CPP) with a corresponding release of cytidine 5-monophosphate (CMP). This is 2-C-methyl-D-erythritol 2,4-cyclodiphosphate synthase from Halalkalibacterium halodurans (strain ATCC BAA-125 / DSM 18197 / FERM 7344 / JCM 9153 / C-125) (Bacillus halodurans).